The chain runs to 112 residues: uncharacterized protein (112 aa).

Residues 82–104 (IFFGFSIIASYFLKFHLLYVILL) traverse the membrane as a helical segment.

It localises to the membrane. This is an uncharacterized protein from Pasteurella multocida (strain Pm70).